Reading from the N-terminus, the 231-residue chain is Protein INCA1 (231 aa).

The interaction with CCNA1 and CCNA1/CDK2 complex; essential for CDK2 inhibitory activity stretch occupies residues 75–99 (SLHPLEGLPPPEKLWRRKRKKLHLE). The short motif at 90–95 (RRKRKK) is the Nuclear localization signal element. Threonine 180 carries the phosphothreonine modification.

Belongs to the INCA family. Interacts with CCNA1. Identified in a complex with CCNA1 and CDK2. Interacts with ZNF16; the interaction inhibits INCA1 activity and induces the cell cycle process. Interacts with SPACA9. Interacts with CCNA2, CCNB1 and CCNE1. Interacts with the CCNA1/CDK2 complex. Interacts with ING5, DAZAP2, RNF26, USP15, SPOUT1, DPH7, TRIM26 and RAB5C. In terms of processing, phosphorylated when part of a complex with CCNA1 and CDK2.

The protein localises to the nucleus. The protein resides in the cytoplasm. Functionally, binds to CDK2-bound cyclins and inhibits the kinase activity of CDK2; binding to cyclins is critical for its function as CDK inhibitor. Inhibits cell growth and proliferation and may play a role in cell cycle control. Required for ING5-mediated regulation of S-phase progression, enhancement of Fas-induced apoptosis and inhibition of cell growth. This is Protein INCA1 (Inca1) from Mus musculus (Mouse).